A 198-amino-acid chain; its full sequence is Recombination protein RecR (198 aa).

The segment at 57 to 72 adopts a C4-type zinc-finger fold; it reads CSECQTLTDKDPCAVC. One can recognise a Toprim domain in the interval 80 to 175; that stretch reads RIICVVEGVP…KVTRIAQGIP (96 aa).

The protein belongs to the RecR family.

Functionally, may play a role in DNA repair. It seems to be involved in an RecBC-independent recombinational process of DNA repair. It may act with RecF and RecO. The chain is Recombination protein RecR from Anaeromyxobacter sp. (strain Fw109-5).